The following is a 161-amino-acid chain: Large ribosomal subunit protein eL21 (161 aa).

The protein belongs to the eukaryotic ribosomal protein eL21 family.

In Cyanophora paradoxa, this protein is Large ribosomal subunit protein eL21 (RPL21).